The chain runs to 199 residues: Imidazoleglycerol-phosphate dehydratase (199 aa).

This sequence belongs to the imidazoleglycerol-phosphate dehydratase family.

It localises to the cytoplasm. The enzyme catalyses D-erythro-1-(imidazol-4-yl)glycerol 3-phosphate = 3-(imidazol-4-yl)-2-oxopropyl phosphate + H2O. It functions in the pathway amino-acid biosynthesis; L-histidine biosynthesis; L-histidine from 5-phospho-alpha-D-ribose 1-diphosphate: step 6/9. This is Imidazoleglycerol-phosphate dehydratase from Desulfotalea psychrophila (strain LSv54 / DSM 12343).